A 433-amino-acid polypeptide reads, in one-letter code: E3 ubiquitin-protein ligase RGLG5 (433 aa).

The interval 1-61 (MGGSSSKESP…SYNSGRQTPK (61 aa)) is disordered. Gly2 carries the N-myristoyl glycine lipid modification. Positions 22–39 (SVSGSSSYSSAWDQSSYY) are enriched in low complexity. Positions 40 to 61 (QTPNHPSASPVSSYNSGRQTPK) are enriched in polar residues. The region spanning 93 to 313 (NLIVGIDVTK…KEAEFALSAL (221 aa)) is the VWFA domain. The tract at residues 340-383 (IALPPPTYATQSMRNSPRTSRSTSFQNKPYDNGVSSTPPSTTHN) is disordered. The segment covering 347–383 (YATQSMRNSPRTSRSTSFQNKPYDNGVSSTPPSTTHN) has biased composition (polar residues). Residues 390–423 (CPVCLVSAKNMAFNCGHQTCAGCGEDLHVCPICR) form an RING-type zinc finger.

In terms of assembly, interacts with PP2CA. N-myristoylated.

It is found in the cell membrane. It catalyses the reaction S-ubiquitinyl-[E2 ubiquitin-conjugating enzyme]-L-cysteine + [acceptor protein]-L-lysine = [E2 ubiquitin-conjugating enzyme]-L-cysteine + N(6)-ubiquitinyl-[acceptor protein]-L-lysine.. Together with RGLG1, mediates the ubiquitination and subsequent proteasomal degradation of the target protein PP2CA. Functions as a positive regulator of abscisic acid (ABA) signaling through ABA-dependent degradation of PP2CA, a major inhibitor of ABA signaling. The sequence is that of E3 ubiquitin-protein ligase RGLG5 from Arabidopsis thaliana (Mouse-ear cress).